A 106-amino-acid chain; its full sequence is Small ribosomal subunit protein bS16 (106 aa).

Belongs to the bacterial ribosomal protein bS16 family.

In Wolbachia sp. subsp. Brugia malayi (strain TRS), this protein is Small ribosomal subunit protein bS16.